Consider the following 892-residue polypeptide: Translation initiation factor IF-2 (892 aa).

The tract at residues 66-305 (TRSTLNIPGT…SLQQGFQKPA (240 aa)) is disordered. Residues 68–82 (STLNIPGTGGKSKSV) are compositionally biased toward polar residues. Composition is skewed to basic and acidic residues over residues 93-159 (VKRD…KDKV) and 166-216 (DMTK…EENK). Residues 254 to 269 (GRGRNAKAARPAKKGK) show a composition bias toward basic residues. The span at 270–282 (HAESKADREEARA) shows a compositional bias: basic and acidic residues. A tr-type G domain is found at 391–560 (PRAPVVTIMG…LLQAEVLELK (170 aa)). The segment at 400 to 407 (GHVDHGKT) is G1. 400 to 407 (GHVDHGKT) is a binding site for GTP. The interval 425–429 (GITQH) is G2. Residues 446–449 (DTPG) form a G3 region. Residues 446 to 450 (DTPGH) and 500 to 503 (NKID) each bind GTP. The segment at 500–503 (NKID) is G4. The G5 stretch occupies residues 536–538 (SAK).

Belongs to the TRAFAC class translation factor GTPase superfamily. Classic translation factor GTPase family. IF-2 subfamily.

Its subcellular location is the cytoplasm. Functionally, one of the essential components for the initiation of protein synthesis. Protects formylmethionyl-tRNA from spontaneous hydrolysis and promotes its binding to the 30S ribosomal subunits. Also involved in the hydrolysis of GTP during the formation of the 70S ribosomal complex. In Salmonella typhi, this protein is Translation initiation factor IF-2.